The chain runs to 131 residues: Auxin-responsive protein SAUR77 (131 aa).

The protein belongs to the ARG7 family.

In terms of biological role, may be involved in the regulation of ethylene receptor signaling. Promotes cell expansion and plant growth. The sequence is that of Auxin-responsive protein SAUR77 from Arabidopsis thaliana (Mouse-ear cress).